Here is a 118-residue protein sequence, read N- to C-terminus: Ribonuclease P protein component 4 (118 aa).

Positions 59, 62, 85, and 88 each coordinate Zn(2+).

This sequence belongs to the eukaryotic/archaeal RNase P protein component 4 family. As to quaternary structure, consists of a catalytic RNA component and at least 4-5 protein subunits. Zn(2+) serves as cofactor.

Its subcellular location is the cytoplasm. It catalyses the reaction Endonucleolytic cleavage of RNA, removing 5'-extranucleotides from tRNA precursor.. In terms of biological role, part of ribonuclease P, a protein complex that generates mature tRNA molecules by cleaving their 5'-ends. This chain is Ribonuclease P protein component 4, found in Sulfolobus acidocaldarius (strain ATCC 33909 / DSM 639 / JCM 8929 / NBRC 15157 / NCIMB 11770).